A 617-amino-acid chain; its full sequence is V-type proton ATPase catalytic subunit A (617 aa).

257-264 (GAFGCGKT) is an ATP binding site.

This sequence belongs to the ATPase alpha/beta chains family. As to quaternary structure, V-ATPase is a heteromultimeric enzyme composed of a peripheral catalytic V1 complex (components A to H) attached to an integral membrane V0 proton pore complex (components: a, c, c', c'', d, e, f and VOA1). In terms of processing, is a probable target for sumoylation.

It localises to the vacuole membrane. The enzyme catalyses ATP + H2O + 4 H(+)(in) = ADP + phosphate + 5 H(+)(out). Catalytic subunit of the V1 complex of vacuolar(H+)-ATPase (V-ATPase), a multisubunit enzyme composed of a peripheral complex (V1) that hydrolyzes ATP and a membrane integral complex (V0) that translocates protons. V-ATPase is responsible for acidifying and maintaining the pH of intracellular compartments. Mediates oxidative stress response, filamentous growth, and plays an important role in virulence. The protein is V-type proton ATPase catalytic subunit A of Candida albicans (strain SC5314 / ATCC MYA-2876) (Yeast).